The following is a 582-amino-acid chain: Semenogelin-2 (582 aa).

Residues 1-23 (MKSIILFVLSLLLILEKQAAVMG) form the signal peptide. Disordered regions lie at residues 25–65 (KGGS…SSSI), 91–157 (HKTT…GISS), 171–192 (LSKEQASASGAQKGRTQGGSQS), 272–366 (NLNQ…KDIQ), and 393–557 (SNQD…HNTV). The segment covering 50 to 59 (GQKDKQHTES) has biased composition (basic and acidic residues). Positions 111-134 (QKGRDHVKPKRHFRLIVIHRKGGQ) are enriched in basic residues. Composition is skewed to polar residues over residues 137-157 (HGTQNPSQNQGNSPSGKGISS) and 174-192 (EQASASGAQKGRTQGGSQS). A compositionally biased stretch (basic and acidic residues) spans 293–310 (TEERQFNHGEKSVQKDVP). The segment covering 325-335 (KSQNQVSIPSQ) has biased composition (polar residues). Composition is skewed to basic and acidic residues over residues 336–345 (DQEHGHKENK), 353–366 (TEERRLNCGEKDIQ), 396–405 (DQEHGHKENK), and 413–426 (TEERRLNGGEKDIQ). 2 stretches are compositionally biased toward polar residues: residues 427–437 (KSVSKGSISIQ) and 445–455 (KSQNQVTIPSQ). A compositionally biased stretch (basic and acidic residues) spans 456–465 (DQEHGHKENK). 2 stretches are compositionally biased toward polar residues: residues 487 to 498 (KDVSQSSLSFQT) and 506 to 529 (SQIQTPNPNQDQWSGLNAKGNSGK). Basic and acidic residues predominate over residues 530–546 (SADREQDLLSHEQESRY). A compositionally biased stretch (polar residues) spans 547–557 (QQKSSGAHNTV).

The protein belongs to the semenogelin family. As to quaternary structure, interacts with SERPINA5.

It localises to the secreted. Its function is as follows. Participates in the formation of a gel matrix (sperm coagulum) entrapping the accessory gland secretions and ejaculated spermatozoa. This is Semenogelin-2 (SEMG2) from Colobus guereza (Mantled guereza).